The chain runs to 176 residues: Large ribosomal subunit protein uL5 (176 aa).

Belongs to the universal ribosomal protein uL5 family. In terms of assembly, part of the 50S ribosomal subunit; contacts the 5S rRNA and probably tRNA. Forms a bridge to the 30S subunit in the 70S ribosome.

Functionally, this is one of the proteins that bind and probably mediate the attachment of the 5S RNA into the large ribosomal subunit, where it forms part of the central protuberance. In the 70S ribosome it contacts protein S13 of the 30S subunit (bridge B1b), connecting the 2 subunits; this bridge is implicated in subunit movement. May contact the P site tRNA; the 5S rRNA and some of its associated proteins might help stabilize positioning of ribosome-bound tRNAs. The polypeptide is Large ribosomal subunit protein uL5 (Picrophilus torridus (strain ATCC 700027 / DSM 9790 / JCM 10055 / NBRC 100828 / KAW 2/3)).